Reading from the N-terminus, the 300-residue chain is Bifunctional protein FolD (300 aa).

NADP(+) contacts are provided by residues 172 to 174 (GRS), Ser206, and Ile247.

This sequence belongs to the tetrahydrofolate dehydrogenase/cyclohydrolase family. Homodimer.

The catalysed reaction is (6R)-5,10-methylene-5,6,7,8-tetrahydrofolate + NADP(+) = (6R)-5,10-methenyltetrahydrofolate + NADPH. It carries out the reaction (6R)-5,10-methenyltetrahydrofolate + H2O = (6R)-10-formyltetrahydrofolate + H(+). It functions in the pathway one-carbon metabolism; tetrahydrofolate interconversion. In terms of biological role, catalyzes the oxidation of 5,10-methylenetetrahydrofolate to 5,10-methenyltetrahydrofolate and then the hydrolysis of 5,10-methenyltetrahydrofolate to 10-formyltetrahydrofolate. In Rhodopirellula baltica (strain DSM 10527 / NCIMB 13988 / SH1), this protein is Bifunctional protein FolD.